Reading from the N-terminus, the 412-residue chain is 43 kDa receptor-associated protein of the synapse (412 aa).

Residue Gly2 is the site of N-myristoyl glycine attachment. 7 TPR repeats span residues 6–39 (TKQQ…SSDL), 83–116 (LESY…PGTR), 123–156 (GQVS…AHNN), 163–196 (CRVC…VNNY), 206–239 (AMSQ…ALQH), 246–279 (ALCL…MTEI), and 286–319 (VQAL…AEEV). Position 196 is a phosphotyrosine (Tyr196). The RING-type zinc finger occupies 363–403 (CGLCGESIGEKNSRLQALPCSHIFHLRCLQNNGTRSCPNCR). Ser405 is modified (phosphoserine).

The protein belongs to the RAPsyn family. Post-translationally, ubiquitinated by the BCR(KLHL8) complex, leading to its degradation.

The protein localises to the cell membrane. It is found in the postsynaptic cell membrane. Its subcellular location is the cytoplasm. The protein resides in the cytoskeleton. Functionally, postsynaptic protein required for clustering of nicotinic acetylcholine receptors (nAChRs) at the neuromuscular junction. It may link the receptor to the underlying postsynaptic cytoskeleton, possibly by direct association with actin or spectrin. The protein is 43 kDa receptor-associated protein of the synapse (RAPSN) of Homo sapiens (Human).